The primary structure comprises 226 residues: Orotidine 5'-phosphate decarboxylase (226 aa).

Substrate is bound by residues D8, K30, 58 to 67, T117, R177, Q186, G206, and R207; that span reads DLKIHDIPNT. K60 functions as the Proton donor in the catalytic mechanism.

This sequence belongs to the OMP decarboxylase family. Type 1 subfamily. As to quaternary structure, homodimer.

It carries out the reaction orotidine 5'-phosphate + H(+) = UMP + CO2. The protein operates within pyrimidine metabolism; UMP biosynthesis via de novo pathway; UMP from orotate: step 2/2. In terms of biological role, catalyzes the decarboxylation of orotidine 5'-monophosphate (OMP) to uridine 5'-monophosphate (UMP). The sequence is that of Orotidine 5'-phosphate decarboxylase from Campylobacter jejuni subsp. doylei (strain ATCC BAA-1458 / RM4099 / 269.97).